A 138-amino-acid chain; its full sequence is Putative nickel-responsive regulator (138 aa).

H78, H89, H91, and C97 together coordinate Ni(2+).

This sequence belongs to the transcriptional regulatory CopG/NikR family. Ni(2+) is required as a cofactor.

Functionally, transcriptional regulator. The chain is Putative nickel-responsive regulator from Pyrococcus abyssi (strain GE5 / Orsay).